Reading from the N-terminus, the 109-residue chain is MFEIKTVALFVLTAIAEIVGCYLPYLWLRQGASIWLLVPAALALGIFVWLLSLHPEAAGRVYAAYGGAYVAVALAWLWVVDGIKPTNWDFVGVAVTLAGMGIILFAPRA.

Transmembrane regions (helical) follow at residues 7–27, 31–51, 63–83, and 87–107; these read VALF…PYLW, GASI…VWLL, AAYG…VDGI, and NWDF…LFAP.

The protein belongs to the UPF0060 family.

The protein resides in the cell inner membrane. This Janthinobacterium sp. (strain Marseille) (Minibacterium massiliensis) protein is UPF0060 membrane protein mma_0129.